Reading from the N-terminus, the 443-residue chain is Exodeoxyribonuclease 7 large subunit (443 aa).

The protein belongs to the XseA family. Heterooligomer composed of large and small subunits.

It is found in the cytoplasm. The enzyme catalyses Exonucleolytic cleavage in either 5'- to 3'- or 3'- to 5'-direction to yield nucleoside 5'-phosphates.. Bidirectionally degrades single-stranded DNA into large acid-insoluble oligonucleotides, which are then degraded further into small acid-soluble oligonucleotides. The protein is Exodeoxyribonuclease 7 large subunit of Legionella pneumophila (strain Corby).